Consider the following 360-residue polypeptide: Peptide chain release factor 1 (360 aa).

Glutamine 234 carries the N5-methylglutamine modification.

It belongs to the prokaryotic/mitochondrial release factor family. In terms of processing, methylated by PrmC. Methylation increases the termination efficiency of RF1.

Its subcellular location is the cytoplasm. Its function is as follows. Peptide chain release factor 1 directs the termination of translation in response to the peptide chain termination codons UAG and UAA. The chain is Peptide chain release factor 1 from Clostridium perfringens (strain 13 / Type A).